A 436-amino-acid polypeptide reads, in one-letter code: NAD(P)-dependent benzaldehyde dehydrogenase (436 aa).

Residues 117-119 (GPF), 143-147 (KPSET), 175-178 (RDEN), 193-194 (GS), 215-216 (EL), C249, and 337-339 (ELF) contribute to the NADP(+) site. Catalysis depends on residues E215 and C249.

This sequence belongs to the aldehyde dehydrogenase family.

It carries out the reaction benzaldehyde + NAD(+) + H2O = benzoate + NADH + 2 H(+). The catalysed reaction is benzaldehyde + NADP(+) + H2O = benzoate + NADPH + 2 H(+). It participates in aromatic compound metabolism; (R)-mandelate degradation; benzoate from (R)-mandelate: step 4/4. Functionally, NAD or NADP-dependent benzaldehyde dehydrogenase that catalyzes the conversion of benzaldehyde into benzoate in the (R)-mandelate degradation pathway. This chain is NAD(P)-dependent benzaldehyde dehydrogenase (mdlD), found in Pseudomonas putida (Arthrobacter siderocapsulatus).